The following is a 750-amino-acid chain: Photosystem I P700 chlorophyll a apoprotein A1 (750 aa).

Helical transmembrane passes span 70-93, 156-179, 195-219, 291-309, 346-369, 385-411, 433-455, and 531-549; these read VFSA…FHGA, LYCT…FHYH, LNHH…HVSL, IAHH…GHMY, WHAQ…HHMY, LSLF…IFMV, AIIS…LYIH, and FLVH…LILL. Positions 573 and 582 each coordinate [4Fe-4S] cluster. The next 2 membrane-spanning stretches (helical) occupy residues 589-610 and 664-686; these read HVFL…HFSW and LSAY…MFLF. Residue histidine 675 coordinates chlorophyll a'. Chlorophyll a-binding residues include methionine 683 and tyrosine 691. A phylloquinone-binding site is contributed by tryptophan 692. A helical transmembrane segment spans residues 724 to 744; the sequence is AVGVTHYLLGGIATTWAFFLA.

It belongs to the PsaA/PsaB family. As to quaternary structure, the PsaA/B heterodimer binds the P700 chlorophyll special pair and subsequent electron acceptors. PSI consists of a core antenna complex that captures photons, and an electron transfer chain that converts photonic excitation into a charge separation. The eukaryotic PSI reaction center is composed of at least 11 subunits. P700 is a chlorophyll a/chlorophyll a' dimer, A0 is one or more chlorophyll a, A1 is one or both phylloquinones and FX is a shared 4Fe-4S iron-sulfur center. serves as cofactor.

It is found in the plastid. Its subcellular location is the chloroplast thylakoid membrane. It catalyses the reaction reduced [plastocyanin] + hnu + oxidized [2Fe-2S]-[ferredoxin] = oxidized [plastocyanin] + reduced [2Fe-2S]-[ferredoxin]. Functionally, psaA and PsaB bind P700, the primary electron donor of photosystem I (PSI), as well as the electron acceptors A0, A1 and FX. PSI is a plastocyanin-ferredoxin oxidoreductase, converting photonic excitation into a charge separation, which transfers an electron from the donor P700 chlorophyll pair to the spectroscopically characterized acceptors A0, A1, FX, FA and FB in turn. Oxidized P700 is reduced on the lumenal side of the thylakoid membrane by plastocyanin. The polypeptide is Photosystem I P700 chlorophyll a apoprotein A1 (Solanum bulbocastanum (Wild potato)).